The chain runs to 91 residues: Large ribosomal subunit protein bL27 (91 aa).

Positions 1 to 13 are enriched in polar residues; it reads MATKKSGGSSCNG. Positions 1–20 are disordered; sequence MATKKSGGSSCNGRDSRGRR.

It belongs to the bacterial ribosomal protein bL27 family.

The sequence is that of Large ribosomal subunit protein bL27 from Anaplasma phagocytophilum (strain HZ).